The chain runs to 206 residues: Putative 3-methyladenine DNA glycosylase (206 aa).

Belongs to the DNA glycosylase MPG family.

The protein is Putative 3-methyladenine DNA glycosylase of Salinibacter ruber (strain DSM 13855 / M31).